The following is a 939-amino-acid chain: Progesterone receptor (939 aa).

A compositionally biased stretch (basic and acidic residues) spans 1 to 11 (MTERTGKDARA). An AF3; mediates transcriptional activation (in isoform B) region spans residues 1-174 (MTERTGKDAR…RSSQGAACPL (174 aa)). The segment at 1–302 (MTERTGKDAR…AEQDAPAPGC (302 aa)) is disordered. Residues 1-572 (MTERTGKDAR…YSFESLPQKI (572 aa)) are modulating, Ala/Pro-rich. Residue Lys7 forms a Glycyl lysine isopeptide (Lys-Gly) (interchain with G-Cter in SUMO) linkage. Over residues 15-26 (AGGAPSPAPAAE) the composition is skewed to low complexity. Ser20 carries the phosphoserine modification. Basic and acidic residues predominate over residues 27–36 (PESRRRDGGR). Residues 49–67 (AAAAAAAAAAASAAPSAPS) are compositionally biased toward low complexity. The residue at position 141 (Ser141) is a Phosphoserine. Positions 175 to 314 (MSRPEGKAGD…LATTMMDFIH (140 aa)) are mediates transcriptional transrepression (in isoform A). The Nuclear localization signal signature appears at 193-197 (KGPPR). The residue at position 200 (Ser200) is a Phosphoserine. 2 stretches are compositionally biased toward low complexity: residues 211–230 (GAHAWPGAAGKAATQPAALG) and 257–278 (PAAAAGAAPAAPGTAPGGTAPV). A Phosphoserine; by MAPK1 modification is found at Ser303. Ser349 is modified (phosphoserine; by MAPK). A Glycyl lysine isopeptide (Lys-Gly) (interchain with G-Cter in SUMO); alternate cross-link involves residue Lys392. Residue Lys392 forms a Glycyl lysine isopeptide (Lys-Gly) (interchain with G-Cter in ubiquitin); alternate linkage. Residue Ser404 is modified to Phosphoserine; by CDK2. Residues 463-552 (PALECVLYKA…VYQPYLNYLR (90 aa)) are AF1; mediates transcriptional activation. Residue Lys537 forms a Glycyl lysine isopeptide (Lys-Gly) (interchain with G-Cter in SUMO) linkage. 2 consecutive NR C4-type zinc fingers follow at residues 573–593 (CLICGDEASGCHYGVLTCGSC) and 609–633 (CAGRNDCIVDKIRRKNCPACRLRKC). Positions 573-645 (CLICGDEASG…AGMVLGGRKF (73 aa)) form a DNA-binding region, nuclear receptor. Ser682 is modified (phosphoserine). Residues 685 to 919 (QDIQLIPPLI…EFPEMMSEVI (235 aa)) enclose the NR LBD domain. Positions 693 to 939 (LINLLMSIEP…MVKPLLFHKK (247 aa)) are AF2; mediates transcriptional activation.

This sequence belongs to the nuclear hormone receptor family. NR3 subfamily. In terms of assembly, interacts with SMARD1 and UNC45A. Interacts with CUEDC2; the interaction promotes ubiquitination, decreases sumoylation, and represses transcriptional activity. Interacts with PIAS3; the interaction promotes sumoylation of PR in a hormone-dependent manner, inhibits DNA-binding, and alters nuclear export. Interacts with SP1; the interaction requires ligand-induced phosphorylation on Ser-349 by ERK1/2-MAPK. Interacts with PRMT2. Isoform A interacts with NCOR2. Isoform B (but not isoform A) interacts with NCOA2 and NCOA1. Isoform B (but not isoform A) interacts with KLF9. Interacts with GTF2B. In terms of processing, phosphorylated on multiple serine sites. Several of these sites are hormone-dependent. Phosphorylation on Ser-303 occurs preferentially on isoform B, is highly hormone-dependent and modulates ubiquitination and sumoylation on Lys-392. Phosphorylation on Ser-303 and Ser-349 also requires induction by hormone. Basal phosphorylation on Ser-200 and Ser-404 is increased in response to progesterone and can be phosphorylated in vitro by the CDK2-A1 complex. Increased levels of phosphorylation on Ser-404 also in the presence of EGF, heregulin, IGF, PMA and FBS. Phosphorylation at this site by CDK2 is ligand-independent, and increases nuclear translocation and transcriptional activity. Phosphorylation at Ser-303, but not at Ser-200, is impaired during the G(2)/M phase of the cell cycle. Phosphorylation on Ser-349 by ERK1/2 MAPK is required for interaction with SP1. Post-translationally, sumoylation is hormone-dependent and represses transcriptional activity. Sumoylation on all three sites is enhanced by PIAS3. Desumoylated by SENP1. Sumoylation on Lys-392, the main site of sumoylation, is repressed by ubiquitination on the same site, and modulated by phosphorylation at Ser-303. Ubiquitination is hormone-dependent and represses sumoylation on the same site. Promoted by MAPK-mediated phosphorylation on Ser-303. In terms of processing, palmitoylated by ZDHHC7 and ZDHHC21. Palmitoylation is required for plasma membrane targeting and for rapid intracellular signaling via ERK and AKT kinases and cAMP generation. Expressed in mammary gland and uterus.

The protein resides in the nucleus. Its subcellular location is the cytoplasm. Its function is as follows. The steroid hormones and their receptors are involved in the regulation of eukaryotic gene expression and affect cellular proliferation and differentiation in target tissues. Depending on the isoform, progesterone receptor functions as a transcriptional activator or repressor. Functionally, ligand-dependent transdominant repressor of steroid hormone receptor transcriptional activity including repression of its isoform B, MR and ER. Transrepressional activity may involve recruitment of corepressor NCOR2. Transcriptional activator of several progesteron-dependent promoters in a variety of cell types. Involved in activation of SRC-dependent MAPK signaling on hormone stimulation. This is Progesterone receptor (PGR) from Canis lupus familiaris (Dog).